The primary structure comprises 155 residues: V-type proton ATPase 16 kDa proteolipid subunit c (155 aa).

The Lumenal segment spans residues 1 to 10 (MSEAKSGPEY). The chain crosses the membrane as a helical span at residues 11–33 (ASFFAVMGASAAMVFSALGAAYG). Residues 34 to 55 (TAKSGTGIAAMSVMRPEMIMKS) lie on the Cytoplasmic side of the membrane. A helical transmembrane segment spans residues 56 to 76 (IIPVVMAGIIAIYGLVVAVLI). At 77–92 (ANSLNDGISLYRSFLQ) the chain is on the lumenal side. Residues 93–114 (LGAGLSVGLSGLAAGFAIGIVG) form a helical membrane-spanning segment. At 115-131 (DAGVRGTAQQPRLFVGM) the chain is on the cytoplasmic side. A helical membrane pass occupies residues 132–152 (ILILIFAEVLGLYGLIVALIL). The Lumenal segment spans residues 153-155 (STK).

It belongs to the V-ATPase proteolipid subunit family. As to quaternary structure, V-ATPase is a heteromultimeric enzyme made up of two complexes: the ATP-hydrolytic V1 complex and the proton translocation V0 complex. The V1 complex consists of three catalytic AB heterodimers that form a heterohexamer, three peripheral stalks each consisting of EG heterodimers, one central rotor including subunits D and F, and the regulatory subunits C and H. The proton translocation complex V0 consists of the proton transport subunit a, a ring of proteolipid subunits c9c'', rotary subunit d, subunits e and f, and the accessory subunits ATP6AP1/Ac45 and ATP6AP2/PRR. Interacts with the V0 complex V-ATPase subunit a4 ATP6V0A4. Interacts with LASS2. Interacts with RNF182; this interaction leads to ubiquitination and degradation via the proteasome pathway. In terms of processing, ubiquitinated by RNF182, leading to its degradation via the ubiquitin-proteasome pathway.

It is found in the cytoplasmic vesicle. The protein localises to the clathrin-coated vesicle membrane. The protein resides in the secretory vesicle. Its subcellular location is the synaptic vesicle membrane. Proton-conducting pore forming subunit of the V0 complex of vacuolar(H+)-ATPase (V-ATPase), a multisubunit enzyme composed of a peripheral complex (V1) that hydrolyzes ATP and a membrane integral complex (V0) that translocates protons. V-ATPase is responsible for acidifying and maintaining the pH of intracellular compartments and in some cell types, is targeted to the plasma membrane, where it is responsible for acidifying the extracellular environment. The protein is V-type proton ATPase 16 kDa proteolipid subunit c (ATP6V0C) of Ovis aries (Sheep).